A 335-amino-acid chain; its full sequence is GTPase Obg (335 aa).

Residues 1–158 (MFVDQITLEL…RLVELELKLI (158 aa)) enclose the Obg domain. One can recognise an OBG-type G domain in the interval 159-334 (ADIGLVGFPN…LHDLFKSKLS (176 aa)). GTP-binding positions include 165–172 (GFPNAGKS), 190–194 (FTTLH), 215–218 (DIPG), 285–288 (NKID), and 315–317 (SGL). Mg(2+) contacts are provided by Ser172 and Thr192.

It belongs to the TRAFAC class OBG-HflX-like GTPase superfamily. OBG GTPase family. Monomer. Mg(2+) serves as cofactor.

Its subcellular location is the cytoplasm. In terms of biological role, an essential GTPase which binds GTP, GDP and possibly (p)ppGpp with moderate affinity, with high nucleotide exchange rates and a fairly low GTP hydrolysis rate. Plays a role in control of the cell cycle, stress response, ribosome biogenesis and in those bacteria that undergo differentiation, in morphogenesis control. The sequence is that of GTPase Obg from Chlamydia muridarum (strain MoPn / Nigg).